A 190-amino-acid chain; its full sequence is RNA pyrophosphohydrolase (190 aa).

The Nudix hydrolase domain maps to 6 to 149; that stretch reads GYRPNVGIIL…KRDVYTQALN (144 aa). The Nudix box motif lies at 38-59; sequence GGIKYGESPVQAMYRELHEEVG. A disordered region spans residues 167–190; sequence QRVHGPRSTDNPSSETDGHAHIAG.

This sequence belongs to the Nudix hydrolase family. RppH subfamily. A divalent metal cation serves as cofactor.

In terms of biological role, accelerates the degradation of transcripts by removing pyrophosphate from the 5'-end of triphosphorylated RNA, leading to a more labile monophosphorylated state that can stimulate subsequent ribonuclease cleavage. The polypeptide is RNA pyrophosphohydrolase (Bordetella parapertussis (strain 12822 / ATCC BAA-587 / NCTC 13253)).